The chain runs to 155 residues: Putative pre-16S rRNA nuclease (155 aa).

It belongs to the YqgF nuclease family.

The protein resides in the cytoplasm. Its function is as follows. Could be a nuclease involved in processing of the 5'-end of pre-16S rRNA. The polypeptide is Putative pre-16S rRNA nuclease (Xanthomonas axonopodis pv. citri (strain 306)).